Reading from the N-terminus, the 291-residue chain is Small ribosomal subunit biogenesis GTPase RsgA 1 (291 aa).

Positions 63-221 constitute a CP-type G domain; the sequence is ENALVRPPVA…VADTPGFSSI (159 aa). GTP contacts are provided by residues 112 to 115 and 164 to 172; these read SKMD and GQSGVGKST. 4 residues coordinate Zn(2+): cysteine 245, cysteine 250, histidine 252, and cysteine 258.

It belongs to the TRAFAC class YlqF/YawG GTPase family. RsgA subfamily. In terms of assembly, monomer. Associates with 30S ribosomal subunit, binds 16S rRNA. The cofactor is Zn(2+).

Its subcellular location is the cytoplasm. In terms of biological role, one of several proteins that assist in the late maturation steps of the functional core of the 30S ribosomal subunit. Helps release RbfA from mature subunits. May play a role in the assembly of ribosomal proteins into the subunit. Circularly permuted GTPase that catalyzes slow GTP hydrolysis, GTPase activity is stimulated by the 30S ribosomal subunit. This chain is Small ribosomal subunit biogenesis GTPase RsgA 1, found in Listeria monocytogenes serotype 4b (strain F2365).